Here is a 106-residue protein sequence, read N- to C-terminus: Iron-sulfur cluster assembly protein CyaY (106 aa).

The protein belongs to the frataxin family.

Functionally, involved in iron-sulfur (Fe-S) cluster assembly. May act as a regulator of Fe-S biogenesis. The polypeptide is Iron-sulfur cluster assembly protein CyaY (Salmonella typhimurium (strain LT2 / SGSC1412 / ATCC 700720)).